The following is a 364-amino-acid chain: tRNA 2-selenouridine synthase (364 aa).

The Rhodanese domain maps to 14–137 (LLADTPLIDV…LRQTAIQATW (124 aa)). The active-site S-selanylcysteine intermediate is Cys-97.

Belongs to the SelU family. In terms of assembly, monomer.

It carries out the reaction 5-methylaminomethyl-2-thiouridine(34) in tRNA + selenophosphate + (2E)-geranyl diphosphate + H2O + H(+) = 5-methylaminomethyl-2-selenouridine(34) in tRNA + (2E)-thiogeraniol + phosphate + diphosphate. The enzyme catalyses 5-methylaminomethyl-2-thiouridine(34) in tRNA + (2E)-geranyl diphosphate = 5-methylaminomethyl-S-(2E)-geranyl-thiouridine(34) in tRNA + diphosphate. It catalyses the reaction 5-methylaminomethyl-S-(2E)-geranyl-thiouridine(34) in tRNA + selenophosphate + H(+) = 5-methylaminomethyl-2-(Se-phospho)selenouridine(34) in tRNA + (2E)-thiogeraniol. The catalysed reaction is 5-methylaminomethyl-2-(Se-phospho)selenouridine(34) in tRNA + H2O = 5-methylaminomethyl-2-selenouridine(34) in tRNA + phosphate. Its function is as follows. Involved in the post-transcriptional modification of the uridine at the wobble position (U34) of tRNA(Lys), tRNA(Glu) and tRNA(Gln). Catalyzes the conversion of 2-thiouridine (S2U-RNA) to 2-selenouridine (Se2U-RNA). Acts in a two-step process involving geranylation of 2-thiouridine (S2U) to S-geranyl-2-thiouridine (geS2U) and subsequent selenation of the latter derivative to 2-selenouridine (Se2U) in the tRNA chain. The protein is tRNA 2-selenouridine synthase of Salmonella typhi.